Here is a 71-residue protein sequence, read N- to C-terminus: Large ribosomal subunit protein eL38 (71 aa).

The protein belongs to the eukaryotic ribosomal protein eL38 family.

The protein is Large ribosomal subunit protein eL38 (RpL38) of Ixodes scapularis (Black-legged tick).